The chain runs to 396 residues: MKEEIPPRSPILDEQPSTPLEHQETSQSVDCKICGDRASGFHYGVHACEGCKGFFRRTIRMRLQYEHCDRNCKIQKKNRNKCQYCRFNKCLSLGMSHNAIRFGRMPESEKRKLVQAPVSDSAAPDSPVSDLDVLSQLIHSSYMNTFTMTKKRARDILTGRNSISPFVIHDMDTLWQAEQGTVWEQLPTQNLTGTEIGVHVFYRCQCTSVETVRALTDFAKRIPGFGTLYLNDQVTLLKYGVHEAIFCMLASLMNKDGLLVAGGRGFVTREFLRSLRQPFCHIMEPKFHFASKFNALELNDSDLALFVASIILCGDRPGLINPSQVEDIQEGILGALRRHLKASHTDAPFLFPKLLHKMADLRQLVTEHAELVQSIKRTESSAALHPLLQEIYRDMY.

The disordered stretch occupies residues 1–24 (MKEEIPPRSPILDEQPSTPLEHQE). Over residues 15–24 (QPSTPLEHQE) the composition is skewed to polar residues. The nuclear receptor DNA-binding region spans 28 to 102 (SVDCKICGDR…LGMSHNAIRF (75 aa)). NR C4-type zinc fingers lie at residues 31 to 51 (CKIC…CEGC) and 68 to 90 (CDRN…FNKC). An NR LBD domain is found at 166–394 (FVIHDMDTLW…HPLLQEIYRD (229 aa)).

It belongs to the nuclear hormone receptor family. NR1 subfamily. As to quaternary structure, heterodimer with the retinoid X receptor. Post-translationally, 'Lys-48'-linked polyubiquitinated; leading to proteasomal degradation. Deubiquitinated and stabilized by OTUD3. Ubiquitous.

It is found in the nucleus. Functionally, ligand-activated transcription factor key mediator of energy metabolism in adipose tissues. Receptor that binds peroxisome proliferators such as hypolipidemic drugs and fatty acids. Has a preference for poly-unsaturated fatty acids, such as gamma-linoleic acid and eicosapentanoic acid. Once activated by a ligand, the receptor binds to promoter elements of target genes. Regulates the peroxisomal beta-oxidation pathway of fatty acids. Functions as a transcription activator for the acyl-CoA oxidase gene. Decreases expression of NPC1L1 once activated by a ligand. This Xenopus laevis (African clawed frog) protein is Peroxisome proliferator-activated receptor delta (ppard).